Here is a 185-residue protein sequence, read N- to C-terminus: dTDP-4-dehydrorhamnose 3,5-epimerase (185 aa).

Substrate contacts are provided by residues R26, E31, 49–51 (QDN), and R61. Residue H64 is the Proton acceptor of the active site. 2 residues coordinate substrate: K73 and H120. Y133 (proton donor) is an active-site residue. Substrate contacts are provided by D144 and K171.

This sequence belongs to the dTDP-4-dehydrorhamnose 3,5-epimerase family. In terms of assembly, homodimer.

The enzyme catalyses dTDP-4-dehydro-6-deoxy-alpha-D-glucose = dTDP-4-dehydro-beta-L-rhamnose. Its pathway is carbohydrate biosynthesis; dTDP-L-rhamnose biosynthesis. In terms of biological role, catalyzes the epimerization of the C3' and C5'positions of dTDP-6-deoxy-D-xylo-4-hexulose, forming dTDP-6-deoxy-L-lyxo-4-hexulose. The sequence is that of dTDP-4-dehydrorhamnose 3,5-epimerase (rmlC) from Methanothermobacter thermautotrophicus (strain ATCC 29096 / DSM 1053 / JCM 10044 / NBRC 100330 / Delta H) (Methanobacterium thermoautotrophicum).